The chain runs to 57 residues: DNA-directed RNA polymerase subunit Rpo6 (57 aa).

It belongs to the archaeal Rpo6/eukaryotic RPB6 RNA polymerase subunit family. In terms of assembly, part of the RNA polymerase complex.

The protein resides in the cytoplasm. It is found in the chromosome. The enzyme catalyses RNA(n) + a ribonucleoside 5'-triphosphate = RNA(n+1) + diphosphate. Functionally, DNA-dependent RNA polymerase (RNAP) catalyzes the transcription of DNA into RNA using the four ribonucleoside triphosphates as substrates. The chain is DNA-directed RNA polymerase subunit Rpo6 from Thermococcus kodakarensis (strain ATCC BAA-918 / JCM 12380 / KOD1) (Pyrococcus kodakaraensis (strain KOD1)).